The chain runs to 761 residues: Phosphoribosylformylglycinamidine synthase subunit PurL (761 aa).

Residue histidine 58 is part of the active site. ATP contacts are provided by tyrosine 61 and lysine 105. A Mg(2+)-binding site is contributed by glutamate 107. Residues 108–111 (SHNH) and arginine 130 each bind substrate. Histidine 109 (proton acceptor) is an active-site residue. Mg(2+) is bound at residue aspartate 131. Substrate is bound at residue glutamine 259. Position 287 (aspartate 287) interacts with Mg(2+). 331-333 (ESQ) is a binding site for substrate. The ATP site is built by asparagine 519 and glycine 556. Asparagine 557 contacts Mg(2+). Position 559 (serine 559) interacts with substrate.

Belongs to the FGAMS family. Monomer. Part of the FGAM synthase complex composed of 1 PurL, 1 PurQ and 2 PurS subunits.

The protein resides in the cytoplasm. It carries out the reaction N(2)-formyl-N(1)-(5-phospho-beta-D-ribosyl)glycinamide + L-glutamine + ATP + H2O = 2-formamido-N(1)-(5-O-phospho-beta-D-ribosyl)acetamidine + L-glutamate + ADP + phosphate + H(+). It participates in purine metabolism; IMP biosynthesis via de novo pathway; 5-amino-1-(5-phospho-D-ribosyl)imidazole from N(2)-formyl-N(1)-(5-phospho-D-ribosyl)glycinamide: step 1/2. In terms of biological role, part of the phosphoribosylformylglycinamidine synthase complex involved in the purines biosynthetic pathway. Catalyzes the ATP-dependent conversion of formylglycinamide ribonucleotide (FGAR) and glutamine to yield formylglycinamidine ribonucleotide (FGAM) and glutamate. The FGAM synthase complex is composed of three subunits. PurQ produces an ammonia molecule by converting glutamine to glutamate. PurL transfers the ammonia molecule to FGAR to form FGAM in an ATP-dependent manner. PurS interacts with PurQ and PurL and is thought to assist in the transfer of the ammonia molecule from PurQ to PurL. The protein is Phosphoribosylformylglycinamidine synthase subunit PurL of Rhodococcus opacus (strain B4).